The chain runs to 295 residues: CRISPR-associated endonuclease Cas1 2 (295 aa).

The Mn(2+) site is built by glutamate 155, histidine 215, and glutamate 230.

This sequence belongs to the CRISPR-associated endonuclease Cas1 family. Homodimer, forms a heterotetramer with a Cas2 homodimer. It depends on Mg(2+) as a cofactor. Mn(2+) serves as cofactor.

In terms of biological role, CRISPR (clustered regularly interspaced short palindromic repeat), is an adaptive immune system that provides protection against mobile genetic elements (viruses, transposable elements and conjugative plasmids). CRISPR clusters contain spacers, sequences complementary to antecedent mobile elements, and target invading nucleic acids. CRISPR clusters are transcribed and processed into CRISPR RNA (crRNA). Acts as a dsDNA endonuclease. Involved in the integration of spacer DNA into the CRISPR cassette. The chain is CRISPR-associated endonuclease Cas1 2 from Pyrobaculum aerophilum (strain ATCC 51768 / DSM 7523 / JCM 9630 / CIP 104966 / NBRC 100827 / IM2).